Consider the following 446-residue polypeptide: Exodeoxyribonuclease 7 large subunit (446 aa).

This sequence belongs to the XseA family. In terms of assembly, heterooligomer composed of large and small subunits.

The protein resides in the cytoplasm. The enzyme catalyses Exonucleolytic cleavage in either 5'- to 3'- or 3'- to 5'-direction to yield nucleoside 5'-phosphates.. Functionally, bidirectionally degrades single-stranded DNA into large acid-insoluble oligonucleotides, which are then degraded further into small acid-soluble oligonucleotides. This chain is Exodeoxyribonuclease 7 large subunit, found in Streptococcus thermophilus (strain ATCC BAA-250 / LMG 18311).